The following is a 507-amino-acid chain: DNA nucleotidylexotransferase (507 aa).

A Nuclear localization signal motif is present at residues 11–17 (PLRKKAK). Positions 27-124 (QHNVKFKEIV…RPVEIQNRHL (98 aa)) constitute a BRCT domain. An involved in DNA binding region spans residues 254 to 258 (VGLKT). Residues 329–334 (GFRRGK) and 338–341 (HDVD) contribute to the a 2'-deoxyribonucleoside 5'-triphosphate site. Mg(2+)-binding residues include Asp339, Asp341, and Asp431. 446 to 447 (GW) contacts a 2'-deoxyribonucleoside 5'-triphosphate.

Belongs to the DNA polymerase type-X family. It depends on Mg(2+) as a cofactor. In terms of tissue distribution, found in the thymus and not in the spleen, kidney, intestine, or liver.

The protein localises to the nucleus. The catalysed reaction is DNA(n) + a 2'-deoxyribonucleoside 5'-triphosphate = DNA(n+1) + diphosphate. In terms of biological role, template-independent DNA polymerase which catalyzes the random addition of deoxynucleoside 5'-triphosphate to the 3'-end of a DNA initiator. One of the in vivo functions of this enzyme is the addition of nucleotides at the junction (N region) of rearranged Ig heavy chain and T-cell receptor gene segments during the maturation of B- and T-cells. In Xenopus laevis (African clawed frog), this protein is DNA nucleotidylexotransferase (dntt).